Here is a 209-residue protein sequence, read N- to C-terminus: Uracil phosphoribosyltransferase (209 aa).

Residues Arg77, Arg102, and 129–137 (DPMLATGSS) contribute to the 5-phospho-alpha-D-ribose 1-diphosphate site. Residues Ile192 and 197–199 (GDA) contribute to the uracil site. Asp198 lines the 5-phospho-alpha-D-ribose 1-diphosphate pocket.

This sequence belongs to the UPRTase family. It depends on Mg(2+) as a cofactor.

The enzyme catalyses UMP + diphosphate = 5-phospho-alpha-D-ribose 1-diphosphate + uracil. The protein operates within pyrimidine metabolism; UMP biosynthesis via salvage pathway; UMP from uracil: step 1/1. With respect to regulation, allosterically activated by GTP. In terms of biological role, catalyzes the conversion of uracil and 5-phospho-alpha-D-ribose 1-diphosphate (PRPP) to UMP and diphosphate. This chain is Uracil phosphoribosyltransferase, found in Metamycoplasma hominis (Mycoplasma hominis).